Here is a 2285-residue protein sequence, read N- to C-terminus: Protein Ycf2 (2285 aa).

1638–1645 (GSIGTGRS) contributes to the ATP binding site.

The protein belongs to the Ycf2 family.

Its subcellular location is the plastid. It localises to the chloroplast stroma. Its function is as follows. Probable ATPase of unknown function. Its presence in a non-photosynthetic plant (Epifagus virginiana) and experiments in tobacco indicate that it has an essential function which is probably not related to photosynthesis. The chain is Protein Ycf2 from Populus trichocarpa (Western balsam poplar).